Here is a 2003-residue protein sequence, read N- to C-terminus: Histone acetyltransferase KAT6A (2003 aa).

The SAMD1-like winged helix (WH) domain maps to 1 to 77 (MVKLANPLYT…LNSYKDPDNP (77 aa)). Residues 1 to 144 (MVKLANPLYT…CGGSAAPGFH (144 aa)) form a required for activation of RUNX1-1 region. Residues 52–166 (ELSVKDGTIL…HGRLLKDGPL (115 aa)) are required for nuclear localization. An H15 domain is found at 95 to 171 (QSVDWNKLLK…KDGPLYRLNT (77 aa)). Residues 144-663 (HQQLRLAIKR…RKGYGRFLID (520 aa)) form an interaction with PML region. N6-acetyllysine is present on Lys172. PHD-type zinc fingers lie at residues 206-265 (IPIC…CKTC) and 262-313 (CKTC…CRPR). An interaction with RUNX1-1 region spans residues 312-663 (PRKKGRKLLQ…RKGYGRFLID (352 aa)). Positions 336-377 (GRPKNRLKKQNTVSKGPFSKVRTGPGRGRKRKITVSSQSASS) are disordered. N6-acetyllysine occurs at positions 350 and 355. Thr369 carries the post-translational modification Phosphothreonine; by PKB/AKT1. Phosphoserine is present on Ser419. Positions 439 to 466 (RKKGNRKSSTSDWPTDNQDGWESKQENE) are disordered. Over residues 445–458 (KSSTSDWPTDNQDG) the composition is skewed to polar residues. Ser472 carries the post-translational modification Phosphoserine. Positions 487–777 (IQEQALQKVG…VDPECLRWTP (291 aa)) are catalytic. Residues 503–777 (PQVRCPSVIE…VDPECLRWTP (275 aa)) enclose the MYST-type HAT domain. Positions 506–809 (RCPSVIEFGK…EPQGQERELE (304 aa)) are mediates interaction with BRPF1, required for histone H3 acetyltransferase activity. The C2HC MYST-type zinc-finger motif lies at 536 to 561 (LYLCEFCLKYMKSRTILQQHMKKCGW). Lys603 is modified (N6-acetyllysine; by autocatalysis). Residues 644–648 (SCIMI) and 653–659 (QRKGYGR) each bind acetyl-CoA. Glu679 serves as the catalytic Proton donor/acceptor. Ser683 serves as a coordination point for acetyl-CoA. The disordered stretch occupies residues 784-939 (VVSEDEDEEA…DGKPDIPKGR (156 aa)). Ser786 carries the phosphoserine modification. The span at 786 to 798 (SEDEDEEADEGEK) shows a compositional bias: acidic residues. Positions 799-841 (EEPQGQERELETRVKVGKSVSREKKDQESSSLIETDKKPEVKE) are enriched in basic and acidic residues. Residues Lys813 and Lys816 each carry the N6-acetyllysine modification. Lys836 participates in a covalent cross-link: Glycyl lysine isopeptide (Lys-Gly) (interchain with G-Cter in SUMO2). The span at 866 to 875 (RRGRCGRKNR) shows a compositional bias: basic residues. Positions 876-890 (KTQERFGDKDSKMLV) are enriched in basic and acidic residues. Tyr901 is modified (phosphotyrosine). Basic and acidic residues predominate over residues 904 to 917 (CEEKSETSQERFTE). A phosphoserine mark is found at Ser941 and Ser954. The disordered stretch occupies residues 983 to 1083 (GFSESSEEEE…EEEESELFPR (101 aa)). An N6-acetyllysine modification is found at Lys1007. Basic residues predominate over residues 1009-1030 (TLKRKKPILHRRRRVRKRKHHN). The segment covering 1031 to 1042 (SSVVTETISETT) has biased composition (low complexity). 2 stretches are compositionally biased toward acidic residues: residues 1043–1053 (EVLDEPFEDSD) and 1065–1079 (FEMEEEEEEEEEESE). Residues Ser1090, Ser1091, and Ser1115 each carry the phosphoserine modification. Disordered regions lie at residues 1096–1174 (RCQS…RKPG), 1197–1438 (IKPG…GAYQ), 1455–1533 (HTDE…PSVS), 1546–1568 (DLGSIESTTENYENPSSYDSTMG), and 1631–1707 (TCVV…CSMN). Positions 1107–1120 (EEEEEEEESDDADD) are enriched in acidic residues. Positions 1136 to 1147 (NSASLEPDTSTP) are enriched in polar residues. Over residues 1148–1174 (MKKKKGWPKGKSRKPIHWKKRPGRKPG) the composition is skewed to basic residues. The segment covering 1204–1229 (RTQENEEIVEVKEDLLEERKEEMHTE) has biased composition (basic and acidic residues). 2 stretches are compositionally biased toward acidic residues: residues 1230-1241 (PDEEAEEEEDTT) and 1282-1299 (EEPQELEEQEQEEEDEVT). Residues 1317-1334 (HLDSLKTKEPEEQPARED) are compositionally biased toward basic and acidic residues. Lys1336 participates in a covalent cross-link: Glycyl lysine isopeptide (Lys-Gly) (interchain with G-Cter in SUMO2). Basic and acidic residues-rich tracts occupy residues 1352–1361 (DSRENTKDKD) and 1393–1414 (DSNTKEELIELKEEEEIPHSEL). Residues 1473-1490 (HNSPISSIPSHPSQSVRS) are compositionally biased toward low complexity. Composition is skewed to polar residues over residues 1502 to 1523 (GYTQISPEQGSLSAPSMQNMET) and 1550 to 1568 (IESTTENYENPSSYDSTMG). The interaction with RUNX1-2 stretch occupies residues 1511–1636 (GSLSAPSMQN…KSPQTCVVER (126 aa)). The tract at residues 1511–1740 (GSLSAPSMQN…YERIPGDFGA (230 aa)) is interaction with PML. Composition is skewed to pro residues over residues 1640-1673 (NQQPPPPPPPPPPPQQPQPPPQQQAAPQPPPPQP) and 1682-1698 (QPPPPQQQPQPPPPQQQ). Residues 1912 to 1947 (SMNMNTLNAMNSYRMTQPMMNSSYHSNPAYMNQTAQ) are required for activation of RUNX1-2.

The protein belongs to the MYST (SAS/MOZ) family. Component of the MOZ/MORF complex composed at least of ING5, KAT6A, KAT6B, MEAF6 and one of BRPF1, BRD1/BRPF2 and BRPF3. Interacts with RUNX2. Interacts with RUNX1; phosphorylation of RUNX1 enhances the interaction. Interacts with p53/TP53. Interacts with PML and this interaction positively regulates its acetylation activity towards p53/TP53. Post-translationally, autoacetylated. Autoacetylation at Lys-603 is required for proper function. Phosphorylation at Thr-369 by PKB/AKT1 inhibits its interaction with PML and negatively regulates its acetylation activity towards p53/TP53.

The protein localises to the nucleus. Its subcellular location is the nucleolus. It is found in the nucleoplasm. The protein resides in the PML body. The catalysed reaction is L-lysyl-[protein] + acetyl-CoA = N(6)-acetyl-L-lysyl-[protein] + CoA + H(+). Histone acetyltransferase that acetylates lysine residues in histone H3 and histone H4 (in vitro). Component of the MOZ/MORF complex which has a histone H3 acetyltransferase activity. May act as a transcriptional coactivator for RUNX1 and RUNX2. Acetylates p53/TP53 at 'Lys-120' and 'Lys-382' and controls its transcriptional activity via association with PML. This Mus musculus (Mouse) protein is Histone acetyltransferase KAT6A (Kat6a).